Consider the following 400-residue polypeptide: Succinate--glutarate CoA-transferase (400 aa).

The Nucleophile role is filled by Asp181.

It belongs to the CoA-transferase III family.

It catalyses the reaction glutarate + succinyl-CoA = glutaryl-CoA + succinate. The protein operates within amino-acid degradation. It functions in the pathway cofactor biosynthesis; biotin biosynthesis. Is involved in L-lysine degradation and provides glutaryl-CoA for biotin synthesis. Catalyzes the conversion of glutarate to glutaryl-CoA via the transfer of CoA from succinyl-CoA. This is Succinate--glutarate CoA-transferase from Agrobacterium fabrum (strain C58 / ATCC 33970) (Agrobacterium tumefaciens (strain C58)).